A 400-amino-acid polypeptide reads, in one-letter code: Nicotinate phosphoribosyltransferase (400 aa).

The residue at position 220 (His220) is a Phosphohistidine; by autocatalysis.

It belongs to the NAPRTase family. In terms of processing, transiently phosphorylated on a His residue during the reaction cycle. Phosphorylation strongly increases the affinity for substrates and increases the rate of nicotinate D-ribonucleotide production. Dephosphorylation regenerates the low-affinity form of the enzyme, leading to product release.

It carries out the reaction nicotinate + 5-phospho-alpha-D-ribose 1-diphosphate + ATP + H2O = nicotinate beta-D-ribonucleotide + ADP + phosphate + diphosphate. It participates in cofactor biosynthesis; NAD(+) biosynthesis; nicotinate D-ribonucleotide from nicotinate: step 1/1. Functionally, catalyzes the synthesis of beta-nicotinate D-ribonucleotide from nicotinate and 5-phospho-D-ribose 1-phosphate at the expense of ATP. The protein is Nicotinate phosphoribosyltransferase of Escherichia coli O45:K1 (strain S88 / ExPEC).